The primary structure comprises 677 residues: DNA ligase (677 aa).

NAD(+) is bound by residues 32-36, 81-82, and glutamate 112; these read DSEYD and SL. Lysine 114 functions as the N6-AMP-lysine intermediate in the catalytic mechanism. Arginine 135, glutamate 171, lysine 288, and lysine 312 together coordinate NAD(+). Residues cysteine 416, cysteine 419, cysteine 434, and cysteine 439 each contribute to the Zn(2+) site. One can recognise a BRCT domain in the interval 598–677; sequence YKPLPLSGVE…QEFINMLEQS (80 aa).

It belongs to the NAD-dependent DNA ligase family. LigA subfamily. It depends on Mg(2+) as a cofactor. The cofactor is Mn(2+).

The catalysed reaction is NAD(+) + (deoxyribonucleotide)n-3'-hydroxyl + 5'-phospho-(deoxyribonucleotide)m = (deoxyribonucleotide)n+m + AMP + beta-nicotinamide D-nucleotide.. DNA ligase that catalyzes the formation of phosphodiester linkages between 5'-phosphoryl and 3'-hydroxyl groups in double-stranded DNA using NAD as a coenzyme and as the energy source for the reaction. It is essential for DNA replication and repair of damaged DNA. The polypeptide is DNA ligase (Dehalococcoides mccartyi (strain ATCC BAA-2266 / KCTC 15142 / 195) (Dehalococcoides ethenogenes (strain 195))).